A 207-amino-acid polypeptide reads, in one-letter code: Ribonuclease HII (207 aa).

The RNase H type-2 domain occupies 12–201 (DLVAGVDEVG…VRAAWEAREG (190 aa)). Residues Asp-18, Glu-19, and Asp-110 each contribute to the a divalent metal cation site.

The protein belongs to the RNase HII family. Mn(2+) is required as a cofactor. The cofactor is Mg(2+).

It localises to the cytoplasm. It carries out the reaction Endonucleolytic cleavage to 5'-phosphomonoester.. Its function is as follows. Endonuclease that specifically degrades the RNA of RNA-DNA hybrids. The sequence is that of Ribonuclease HII from Pseudomonas putida (strain W619).